The primary structure comprises 344 residues: Serpentine receptor class H-72 (344 aa).

The next 7 membrane-spanning stretches (helical) occupy residues 30 to 50 (GLAF…FFTG), 66 to 86 (LSLV…SFFI), 110 to 132 (TVVQ…TLLF), 155 to 175 (WLAG…FNLA), 221 to 241 (SIYM…LVIV), 259 to 279 (YGLI…SVLI), and 292 to 312 (LVSI…LLVH).

The protein belongs to the nematode receptor-like protein srh family.

Its subcellular location is the membrane. This Caenorhabditis elegans protein is Serpentine receptor class H-72 (srh-72).